Here is a 21-residue protein sequence, read N- to C-terminus: Tertiapin (21 aa).

Cystine bridges form between Cys-3–Cys-14 and Cys-5–Cys-18.

In terms of processing, oxidation of Met-13 results in the loss of biological activity. Post-translationally, an amidation at Lys-21 is suggested in Ref.1. As to expression, expressed by the venom gland.

The protein localises to the secreted. Functionally, presynaptic neurotoxin that blocks the inwardly rectifying Kir1.1/KCNJ1 and Kir3.1/3.4 (KCNJ3/KCNJ5) potassium channels with high affinity by binding to the M1-M2 linker region of these channels in a 1:1 stoichiometry. It may block the potassium channel pore by occluding its alpha helix into the channel vestibule. Tertiapin-Q also inhibits calcium-activated large conductance BK-type (KCNMA) potassium channels in a concentration-, and voltage-dependent manner, in addition to inhibiting Kir3.1/3.2 (KCNJ3/KCNJ6) heteromultimers potassium channels. It can prevent dose-dependently acetylcholine(ACh)-induced atrioventricular blocks in mammalian hearts, as KCNJ3/KCNJ5 channels (also named I(KACh), because these channels are activated by ACh) are found in mammalian myocytes. Interacts specifically with calmodulin in the presence of calcium. This chain is Tertiapin, found in Apis mellifera (Honeybee).